A 199-amino-acid polypeptide reads, in one-letter code: Recombination protein RecR (199 aa).

The C4-type zinc finger occupies 56–71 (CAVCGNIAEETQCRIC). One can recognise a Toprim domain in the interval 79–174 (TVICVVEEPK…KVTRLASGLP (96 aa)).

It belongs to the RecR family.

Its function is as follows. May play a role in DNA repair. It seems to be involved in an RecBC-independent recombinational process of DNA repair. It may act with RecF and RecO. In Thermobifida fusca (strain YX), this protein is Recombination protein RecR.